Consider the following 95-residue polypeptide: Phosphoribosyl-ATP pyrophosphatase (95 aa).

This sequence belongs to the PRA-PH family.

It is found in the cytoplasm. It catalyses the reaction 1-(5-phospho-beta-D-ribosyl)-ATP + H2O = 1-(5-phospho-beta-D-ribosyl)-5'-AMP + diphosphate + H(+). The protein operates within amino-acid biosynthesis; L-histidine biosynthesis; L-histidine from 5-phospho-alpha-D-ribose 1-diphosphate: step 2/9. In Methanocella arvoryzae (strain DSM 22066 / NBRC 105507 / MRE50), this protein is Phosphoribosyl-ATP pyrophosphatase.